Reading from the N-terminus, the 265-residue chain is Glutamate racemase (265 aa).

Substrate is bound by residues 7 to 8 (DS) and 39 to 40 (YG). C71 (proton donor/acceptor) is an active-site residue. 72–73 (NT) contacts substrate. C184 (proton donor/acceptor) is an active-site residue. Residue 185–186 (TH) coordinates substrate.

Belongs to the aspartate/glutamate racemases family.

It catalyses the reaction L-glutamate = D-glutamate. It functions in the pathway cell wall biogenesis; peptidoglycan biosynthesis. Functionally, provides the (R)-glutamate required for cell wall biosynthesis. This chain is Glutamate racemase, found in Sulfurovum sp. (strain NBC37-1).